A 147-amino-acid polypeptide reads, in one-letter code: SsrA-binding protein (147 aa).

It belongs to the SmpB family.

It localises to the cytoplasm. Its function is as follows. Required for rescue of stalled ribosomes mediated by trans-translation. Binds to transfer-messenger RNA (tmRNA), required for stable association of tmRNA with ribosomes. tmRNA and SmpB together mimic tRNA shape, replacing the anticodon stem-loop with SmpB. tmRNA is encoded by the ssrA gene; the 2 termini fold to resemble tRNA(Ala) and it encodes a 'tag peptide', a short internal open reading frame. During trans-translation Ala-aminoacylated tmRNA acts like a tRNA, entering the A-site of stalled ribosomes, displacing the stalled mRNA. The ribosome then switches to translate the ORF on the tmRNA; the nascent peptide is terminated with the 'tag peptide' encoded by the tmRNA and targeted for degradation. The ribosome is freed to recommence translation, which seems to be the essential function of trans-translation. This is SsrA-binding protein from Mycoplasma pneumoniae (strain ATCC 29342 / M129 / Subtype 1) (Mycoplasmoides pneumoniae).